We begin with the raw amino-acid sequence, 115 residues long: MSAALLLATLLMTGLGQVAQKLTVEHWRLVAADGWAARLRSPWPWLALLALGLGLACWLLLLQRVEVGSAYPMLALNFVLVTLVARFVFDEPVDRRHLAGLLLIVAGVALLGRQA.

3 helical membrane-spanning segments follow: residues 42–62 (PWPW…LLLL), 65–85 (VEVG…TLVA), and 93–112 (VDRR…ALLG). Positions 46 to 113 (LALLALGLGL…IVAGVALLGR (68 aa)) constitute an EamA domain.

Belongs to the ArnE family. Heterodimer of ArnE and ArnF.

The protein resides in the cell inner membrane. It participates in bacterial outer membrane biogenesis; lipopolysaccharide biosynthesis. Translocates 4-amino-4-deoxy-L-arabinose-phosphoundecaprenol (alpha-L-Ara4N-phosphoundecaprenol) from the cytoplasmic to the periplasmic side of the inner membrane. The polypeptide is Probable 4-amino-4-deoxy-L-arabinose-phosphoundecaprenol flippase subunit ArnE (Pseudomonas paraeruginosa (strain DSM 24068 / PA7) (Pseudomonas aeruginosa (strain PA7))).